A 395-amino-acid chain; its full sequence is Elongation factor Tu (395 aa).

Positions 10 to 204 constitute a tr-type G domain; it reads KPHLNIGTIG…AVDTWIELPE (195 aa). Positions 19–26 are G1; the sequence is GHVDHGKT. 19–26 is a GTP binding site; the sequence is GHVDHGKT. Mg(2+) is bound at residue Thr-26. Positions 60–64 are G2; that stretch reads GITIN. Positions 81–84 are G3; that stretch reads DCPG. Residues 81-85 and 136-139 contribute to the GTP site; these read DCPGH and NKVD. The G4 stretch occupies residues 136 to 139; that stretch reads NKVD. The interval 174-176 is G5; sequence SAL.

It belongs to the TRAFAC class translation factor GTPase superfamily. Classic translation factor GTPase family. EF-Tu/EF-1A subfamily. In terms of assembly, monomer.

The protein localises to the cytoplasm. The catalysed reaction is GTP + H2O = GDP + phosphate + H(+). GTP hydrolase that promotes the GTP-dependent binding of aminoacyl-tRNA to the A-site of ribosomes during protein biosynthesis. The polypeptide is Elongation factor Tu (Christiangramia forsetii (strain DSM 17595 / CGMCC 1.15422 / KT0803) (Gramella forsetii)).